A 211-amino-acid polypeptide reads, in one-letter code: Probable nicotinate-nucleotide adenylyltransferase (211 aa).

This sequence belongs to the NadD family.

It carries out the reaction nicotinate beta-D-ribonucleotide + ATP + H(+) = deamido-NAD(+) + diphosphate. It participates in cofactor biosynthesis; NAD(+) biosynthesis; deamido-NAD(+) from nicotinate D-ribonucleotide: step 1/1. Functionally, catalyzes the reversible adenylation of nicotinate mononucleotide (NaMN) to nicotinic acid adenine dinucleotide (NaAD). The polypeptide is Probable nicotinate-nucleotide adenylyltransferase (Shewanella sediminis (strain HAW-EB3)).